A 673-amino-acid polypeptide reads, in one-letter code: Probable boron transporter 7 (673 aa).

The Cytoplasmic portion of the chain corresponds to Met1–Arg35. A helical transmembrane segment spans residues Ile36 to Glu56. Residues Gln57 to Thr75 lie on the Extracellular side of the membrane. A helical transmembrane segment spans residues Ala76–Ala96. Residues Glu97 to Tyr121 are Cytoplasmic-facing. The helical transmembrane segment at Leu122–Leu142 threads the bilayer. The Extracellular segment spans residues Asn143 to Gly160. Residues Met161–Val181 traverse the membrane as a helical segment. The Cytoplasmic segment spans residues Pro182 to Arg197. A helical membrane pass occupies residues Tyr198 to Ser218. At Arg219–Gly233 the chain is on the extracellular side. The helical transmembrane segment at Phe234 to Val254 threads the bilayer. The Cytoplasmic segment spans residues Pro255–Val289. Residues Pro290–Phe310 form a helical membrane-spanning segment. Over Asp311 to Thr330 the chain is Extracellular. The helical transmembrane segment at Ala331–Leu351 threads the bilayer. Over Pro352–Ser468 the chain is Cytoplasmic. The helical transmembrane segment at Val469–Leu489 threads the bilayer. Topologically, residues Trp490 to Gly556 are extracellular. A helical transmembrane segment spans residues Val557–Leu577. Over Arg578–Ser673 the chain is Cytoplasmic.

The protein belongs to the anion exchanger (TC 2.A.31.3) family.

It is found in the membrane. Functionally, putative boron transporter. Boron is essential for maintaining the integrity of plants cell walls. This is Probable boron transporter 7 (BOR7) from Arabidopsis thaliana (Mouse-ear cress).